The chain runs to 120 residues: Kidney androgen-regulated protein (120 aa).

The N-terminal stretch at 1-18 is a signal peptide; that stretch reads MMICKVLVITVFCVLTVA.

Its subcellular location is the secreted. This is Kidney androgen-regulated protein (Kap) from Rattus norvegicus (Rat).